The primary structure comprises 596 residues: Phosphomethylpyrimidine synthase 1 (596 aa).

Residues Asn228, Met257, Tyr286, His322, 342 to 344, 383 to 386, and Glu422 each bind substrate; these read SRG and DGLR. His426 provides a ligand contact to Zn(2+). Tyr449 contributes to the substrate binding site. His490 contributes to the Zn(2+) binding site. [4Fe-4S] cluster-binding residues include Cys570, Cys573, and Cys578.

This sequence belongs to the ThiC family. Homodimer. [4Fe-4S] cluster is required as a cofactor.

The catalysed reaction is 5-amino-1-(5-phospho-beta-D-ribosyl)imidazole + S-adenosyl-L-methionine = 4-amino-2-methyl-5-(phosphooxymethyl)pyrimidine + CO + 5'-deoxyadenosine + formate + L-methionine + 3 H(+). It functions in the pathway cofactor biosynthesis; thiamine diphosphate biosynthesis. In terms of biological role, catalyzes the synthesis of the hydroxymethylpyrimidine phosphate (HMP-P) moiety of thiamine from aminoimidazole ribotide (AIR) in a radical S-adenosyl-L-methionine (SAM)-dependent reaction. This chain is Phosphomethylpyrimidine synthase 1, found in Syntrophotalea carbinolica (strain DSM 2380 / NBRC 103641 / GraBd1) (Pelobacter carbinolicus).